The primary structure comprises 666 residues: tRNA 5-methylaminomethyl-2-thiouridine biosynthesis bifunctional protein MnmC (666 aa).

The segment at 1–245 (MKQYAIQPAT…KREMLCGVME (245 aa)) is tRNA (mnm(5)s(2)U34)-methyltransferase. The segment at 270-666 (IGGGIASALL…RKLLKGKAVK (397 aa)) is FAD-dependent cmnm(5)s(2)U34 oxidoreductase.

This sequence in the N-terminal section; belongs to the methyltransferase superfamily. tRNA (mnm(5)s(2)U34)-methyltransferase family. It in the C-terminal section; belongs to the DAO family. FAD is required as a cofactor.

The protein localises to the cytoplasm. The enzyme catalyses 5-aminomethyl-2-thiouridine(34) in tRNA + S-adenosyl-L-methionine = 5-methylaminomethyl-2-thiouridine(34) in tRNA + S-adenosyl-L-homocysteine + H(+). Catalyzes the last two steps in the biosynthesis of 5-methylaminomethyl-2-thiouridine (mnm(5)s(2)U) at the wobble position (U34) in tRNA. Catalyzes the FAD-dependent demodification of cmnm(5)s(2)U34 to nm(5)s(2)U34, followed by the transfer of a methyl group from S-adenosyl-L-methionine to nm(5)s(2)U34, to form mnm(5)s(2)U34. This Salmonella paratyphi A (strain ATCC 9150 / SARB42) protein is tRNA 5-methylaminomethyl-2-thiouridine biosynthesis bifunctional protein MnmC.